We begin with the raw amino-acid sequence, 380 residues long: 3-dehydroquinate synthase (380 aa).

The protein belongs to the archaeal-type DHQ synthase family.

The enzyme catalyses 2-amino-2,3,7-trideoxy-D-lyxo-hept-6-ulosonate + NAD(+) + H2O = 3-dehydroquinate + NH4(+) + NADH + H(+). In terms of biological role, catalyzes the oxidative deamination and cyclization of 2-amino-3,7-dideoxy-D-threo-hept-6-ulosonic acid (ADH) to yield 3-dehydroquinate (DHQ), which is fed into the canonical shikimic pathway of aromatic amino acid biosynthesis. In Methanosarcina mazei (strain ATCC BAA-159 / DSM 3647 / Goe1 / Go1 / JCM 11833 / OCM 88) (Methanosarcina frisia), this protein is 3-dehydroquinate synthase.